Consider the following 632-residue polypeptide: 1-deoxy-D-xylulose-5-phosphate synthase (632 aa).

Residues histidine 74 and 115–117 (AHS) contribute to the thiamine diphosphate site. Aspartate 146 provides a ligand contact to Mg(2+). Thiamine diphosphate-binding positions include 147–148 (GA), asparagine 176, tyrosine 283, and glutamate 365. Mg(2+) is bound at residue asparagine 176.

Belongs to the transketolase family. DXPS subfamily. As to quaternary structure, homodimer. The cofactor is Mg(2+). Thiamine diphosphate serves as cofactor.

The catalysed reaction is D-glyceraldehyde 3-phosphate + pyruvate + H(+) = 1-deoxy-D-xylulose 5-phosphate + CO2. The protein operates within metabolic intermediate biosynthesis; 1-deoxy-D-xylulose 5-phosphate biosynthesis; 1-deoxy-D-xylulose 5-phosphate from D-glyceraldehyde 3-phosphate and pyruvate: step 1/1. Functionally, catalyzes the acyloin condensation reaction between C atoms 2 and 3 of pyruvate and glyceraldehyde 3-phosphate to yield 1-deoxy-D-xylulose-5-phosphate (DXP). The protein is 1-deoxy-D-xylulose-5-phosphate synthase of Paraburkholderia phymatum (strain DSM 17167 / CIP 108236 / LMG 21445 / STM815) (Burkholderia phymatum).